Here is a 1459-residue protein sequence, read N- to C-terminus: ARF guanine-nucleotide exchange factor 2 (1459 aa).

Serine 46 and serine 284 each carry phosphoserine. Positions 570–714 (FNEKPKKGIP…IIMLNTDLHN (145 aa)) constitute an SEC7 domain. Residues 1412-1459 (EKGNGSSSHGSAHEQTPESNDVEIEATAPIDDNTDDDNKPKLSDVEKD) form a disordered region. Residues 1447–1459 (DDNKPKLSDVEKD) are compositionally biased toward basic and acidic residues.

Interacts (via SEC7 domain) with DRS2 (via C-terminus); the interaction is direct. Interacts with GMH1.

The protein resides in the cytoplasm. The protein localises to the cytosol. It localises to the membrane. It is found in the golgi apparatus membrane. Its function is as follows. Activates the ARF proteins by exchanging bound GDP for free GTP. Plays a role in maintaining mitochondrial morphology. Stimulates DRS2 flippase activity. The protein is ARF guanine-nucleotide exchange factor 2 (GEA2) of Saccharomyces cerevisiae (strain ATCC 204508 / S288c) (Baker's yeast).